A 270-amino-acid polypeptide reads, in one-letter code: F-actin-capping protein subunit beta (270 aa).

A compositionally biased stretch (polar residues) spans 245–258; sequence QTRSQKSTTDSQEQ. The segment at 245–270 is disordered; it reads QTRSQKSTTDSQEQQQKEVIKGLQNL.

It belongs to the F-actin-capping protein beta subunit family. In terms of assembly, component of the F-actin capping complex, composed of a heterodimer of an alpha and a beta subunit.

The protein localises to the cytoplasm. It is found in the cytoskeleton. It localises to the actin patch. F-actin-capping proteins bind in a Ca(2+)-independent manner to the fast growing ends of actin filaments (barbed end) thereby blocking the exchange of subunits at these ends. Unlike other capping proteins (such as gelsolin and severin), these proteins do not sever actin filaments. This chain is F-actin-capping protein subunit beta (CAP2), found in Candida glabrata (strain ATCC 2001 / BCRC 20586 / JCM 3761 / NBRC 0622 / NRRL Y-65 / CBS 138) (Yeast).